The chain runs to 63 residues: Metallothionein (63 aa).

Positions 1-30 (MDPQDCTCAAGDSCSCAGSCKCKNCRCRSC) are beta. Positions 6, 8, 14, 16, 20, 22, 25, 27, 30, 34, 35, 37, 38, 42, 45, 49, 51, 59, 61, and 62 each coordinate a divalent metal cation. An alpha region spans residues 31 to 63 (RKSCCSCCPAGCNNCAKGCVCKEPASSKCSCCH).

Belongs to the metallothionein superfamily. Type 1 family.

Functionally, metallothioneins have a high content of cysteine residues that bind various heavy metals. This is Metallothionein from Anas platyrhynchos (Mallard).